Here is a 541-residue protein sequence, read N- to C-terminus: 2-hydroxyacylsphingosine 1-beta-galactosyltransferase (541 aa).

A signal peptide spans methionine 1–alanine 20. N-linked (GlcNAc...) asparagine glycans are attached at residues asparagine 78, asparagine 333, and asparagine 442. Residues tyrosine 472–leucine 492 traverse the membrane as a helical segment.

It belongs to the UDP-glycosyltransferase family.

It localises to the membrane. The protein localises to the endoplasmic reticulum. It carries out the reaction an N-acylsphing-4-enine + UDP-alpha-D-galactose = a beta-D-galactosyl-(1&lt;-&gt;1')-N-acylsphing-4-enine + UDP + H(+). The catalysed reaction is an N-acyl-sphingoid base + UDP-alpha-D-galactose = a D-galactosylceramide + UDP + H(+). It catalyses the reaction N-(2-hydroxy-hexanoyl)-sphing-4-enine + UDP-alpha-D-galactose = N-(2-hydroxy-hexanoyl)-beta-D-galactosyl-sphing-4-enine + UDP + H(+). The enzyme catalyses N-(2-hydroxy-hexanoyl)-sphinganine + UDP-alpha-D-galactose = N-(2-hydroxyhexanoyl)-beta-D-galactosylsphinganine + UDP + H(+). Its pathway is sphingolipid metabolism; galactosylceramide biosynthesis. Its function is as follows. Catalyzes the transfer of galactose to ceramide, a key enzymatic step in the biosynthesis of galactocerebrosides, which are abundant sphingolipids of the myelin membrane of the central nervous system and peripheral nervous system. Galactosylates both hydroxy- and non-hydroxy fatty acid-containing ceramides and diglycerides. The chain is 2-hydroxyacylsphingosine 1-beta-galactosyltransferase from Homo sapiens (Human).